Consider the following 582-residue polypeptide: Zinc finger protein 319 (582 aa).

Residues 1-14 (MSESWQQPPQTQPQ) are compositionally biased toward low complexity. The segment at 1-39 (MSESWQQPPQTQPQQPQPPQPQHHAEPPPALAEHTLPPG) is disordered. Residues 76-100 (PKCGVCGHDLAHLSSPHEHQCLAGH) form a C2H2-type 1 zinc finger. Residues 104–126 (FQCTQCLKIFHQATDLLEHQCVQ) form a C2H2-type 2; degenerate zinc finger. A Glycyl lysine isopeptide (Lys-Gly) (interchain with G-Cter in SUMO2) cross-link involves residue lysine 130. A C2H2-type 3 zinc finger spans residues 132–154 (FVCGVCKMGFSLLTSLAQHHSSH). A compositionally biased stretch (low complexity) spans 174 to 196 (EPATTAAPSLPAAPAPSTVTPAE). The tract at residues 174-198 (EPATTAAPSLPAAPAPSTVTPAEQA) is disordered. C2H2-type zinc fingers lie at residues 202 to 224 (YSCP…ERIH), 230 to 252 (YKCT…KRTH), and 258 to 280 (YKCA…MYAH). Residue serine 281 is modified to Phosphoserine. Residues 287–309 (FRCNVCELHFKESSELLQHPCTP) form a C2H2-type 7; degenerate zinc finger. C2H2-type zinc fingers lie at residues 315-337 (FRCG…ERTH), 343-365 (FKCD…RRTH), and 371-393 (FKCG…QHVH). The segment at 399 to 421 (FKCPVCQKGFDQSAELLRHKCLP) adopts a C2H2-type 11; degenerate zinc-finger fold. A C2H2-type 12 zinc finger spans residues 428–450 (FKCPVCNKAYKRASALQKHQLAH). The segment at 458–480 (LRCTLCERRFFSSSEFVQHRCDP) adopts a C2H2-type 13; degenerate zinc-finger fold. 3 C2H2-type zinc fingers span residues 486-508 (LKCP…RRVH), 514-536 (YKCP…QGVH), and 542-564 (FKCV…SAQH).

It belongs to the krueppel C2H2-type zinc-finger protein family.

It localises to the nucleus. May be involved in transcriptional regulation. The protein is Zinc finger protein 319 (ZNF319) of Homo sapiens (Human).